The following is a 138-amino-acid chain: Succinate dehydrogenase assembly factor 4, mitochondrial (138 aa).

The transit peptide at 1-32 directs the protein to the mitochondrion; that stretch reads MLCAIKSTGYRYPRTGALNLLRGRPFNMATRK. The segment covering 71-98 has biased composition (polar residues); that stretch reads QATGDRTKESLNSPLLTKNDIGSFSPEF. The disordered stretch occupies residues 71 to 138; it reads QATGDRTKES…YSFNGRVTDF (68 aa).

Belongs to the SDHAF4 family. In terms of assembly, interacts with SDH1 in its FAD-bound form.

It localises to the mitochondrion matrix. Its function is as follows. Plays an essential role in the assembly of succinate dehydrogenase (SDH), an enzyme complex (also referred to as respiratory complex II) that is a component of both the tricarboxylic acid (TCA) cycle and the mitochondrial electron transport chain, and which couples the oxidation of succinate to fumarate with the reduction of ubiquinone (coenzyme Q) to ubiquinol. Binds to the flavoprotein subunit SDH1 in its FAD-bound form, blocking the generation of excess reactive oxygen species (ROS) and facilitating its assembly with the iron-sulfur protein subunit SDH2 into the SDH catalytic dimer. The protein is Succinate dehydrogenase assembly factor 4, mitochondrial of Saccharomyces cerevisiae (strain ATCC 204508 / S288c) (Baker's yeast).